We begin with the raw amino-acid sequence, 314 residues long: RNA 2'-O-methyltransferase FBLL1 (314 aa).

The span at 1–59 (MKPAGGRGGWGWGGGKGGSKGGDTGSGTKGGFGARTRGSSGGGRGRGRGGGGGGGGGGG) shows a compositional bias: gly residues. Residues 1–82 (MKPAGGRGGW…RRKKGITVSV (82 aa)) form a disordered region. Arg-7 carries the post-translational modification Omega-N-methylarginine. Residues 64–77 (RGGPGKNKNRRKKG) show a composition bias toward basic residues. S-adenosyl-L-methionine-binding positions include 166–167 (TT), 185–186 (EF), 210–211 (DA), and 230–233 (DVAQ).

Belongs to the methyltransferase superfamily. Fibrillarin family. In terms of assembly, component of a box C/D small nucleolar ribonucleoprotein (snoRNP) complex composed of FBLL1, SNU13/NHP2L1, NOP56 and NOP58 and a guide snoRNA which mediates 2'-hydroxyl ribose methylation in RNAs.

It localises to the nucleus. It is found in the nucleolus. The enzyme catalyses a ribonucleotide in RNA + S-adenosyl-L-methionine = a 2'-O-methylribonucleotide in RNA + S-adenosyl-L-homocysteine + H(+). Its function is as follows. S-adenosyl-L-methionine-dependent RNA methyltransferase that catalyzes 2'-hydroxyl ribose methylation in RNAs. Functions as part of box C/D small nucleolar ribonucleoprotein (snoRNP) complexes, where guide snoRNAs ensure methylation specificity through base pairing with RNA substrates. Exhibits broad substrate specificity, methylating multiple sites on ribosomal RNAs (rRNAs) and messenger RNAs (mRNAs) depending on the guide snoRNA incorporated in the complex. Specifically expressed in brain, it regulates the expression of GAP43 by stabilizing its mRNA through methylation and thereby plays an indirect role in neuronal differentiation. The protein is RNA 2'-O-methyltransferase FBLL1 of Mus musculus (Mouse).